The primary structure comprises 254 residues: MKRQYILHVKPNIHARISSIHQSSGGVFEVEDVNNVQYNVNDNELSVKGNYIGGEYGEMIWNIINTTNVTQYVALVRGATIKLQDSSSSQEVTIPDYLFGRAFAEVYFNLGISQFGDDATAFETPYTLAVYNGDTIGFVFAVKPYTVIHVPEYGFTNLVSYTARLLPVKLGGINTYIDFYDYSEVVQYQSQTGYNINYMPDPIVFSSIQVKADANLLGYGFHERLLLPIPTQWLNIANDVATALEKLKSLSKLL.

This is an uncharacterized protein from Acidianus filamentous virus 2 (isolate Italy/Pozzuoli) (AFV-2).